We begin with the raw amino-acid sequence, 503 residues long: Variant surface glycoprotein AnTaT 1.1 (503 aa).

An N-terminal signal peptide occupies residues 1–29 (MVTKERNAALKIVMLVASALTLHPQQALA). 2 cysteine pairs are disulfide-bonded: Cys-45–Cys-172 and Cys-154–Cys-209. An N-linked (GlcNAc...) asparagine glycan is attached at Asn-113. N-linked (GlcNAc...) asparagine glycosylation is found at Asn-419 and Asn-432. Residue Asp-480 is the site of GPI-anchor amidated aspartate attachment. Residues 481 to 503 (SSILLTKNFALSVVSAALVALLF) constitute a propeptide, removed in mature form.

It localises to the cell membrane. Its function is as follows. VSG forms a coat on the surface of the parasite. The trypanosome evades the immune response of the host by expressing a series of antigenically distinct VSGs from an estimated 1000 VSG genes. The chain is Variant surface glycoprotein AnTaT 1.1 from Trypanosoma brucei brucei.